Reading from the N-terminus, the 214-residue chain is Glucose-6-phosphate isomerase (214 aa).

Fe cation-binding residues include His92, His94, Glu101, and His140.

This sequence belongs to the archaeal-type GPI family. In terms of assembly, homodimer.

Its subcellular location is the cytoplasm. The catalysed reaction is alpha-D-glucose 6-phosphate = beta-D-fructose 6-phosphate. The protein operates within carbohydrate degradation; glycolysis; D-glyceraldehyde 3-phosphate and glycerone phosphate from D-glucose: step 2/4. The sequence is that of Glucose-6-phosphate isomerase from Sinorhizobium medicae (strain WSM419) (Ensifer medicae).